The sequence spans 154 residues: uncharacterized protein (154 aa).

The Zn(2+) site is built by C4, C7, C16, C19, C24, C28, H32, and C36. The segment at 4 to 36 (CSICNESEIKYKCPKCSFPYCSLPCWKIHQSQC) adopts an HIT-type zinc-finger fold.

This is an uncharacterized protein from Schizosaccharomyces pombe (strain 972 / ATCC 24843) (Fission yeast).